The following is a 501-amino-acid chain: Lysine--tRNA ligase (501 aa).

Mg(2+)-binding residues include Glu404 and Glu411.

It belongs to the class-II aminoacyl-tRNA synthetase family. In terms of assembly, homodimer. Mg(2+) serves as cofactor.

It localises to the cytoplasm. The enzyme catalyses tRNA(Lys) + L-lysine + ATP = L-lysyl-tRNA(Lys) + AMP + diphosphate. The sequence is that of Lysine--tRNA ligase from Campylobacter jejuni subsp. jejuni serotype O:6 (strain 81116 / NCTC 11828).